We begin with the raw amino-acid sequence, 575 residues long: Sulfite reductase [NADPH] hemoprotein beta-component (575 aa).

[4Fe-4S] cluster-binding residues include C438, C444, C484, and C488. C488 is a siroheme binding site.

This sequence belongs to the nitrite and sulfite reductase 4Fe-4S domain family. In terms of assembly, alpha(8)-beta(8). The alpha component is a flavoprotein, the beta component is a hemoprotein. The cofactor is siroheme. [4Fe-4S] cluster serves as cofactor.

The enzyme catalyses hydrogen sulfide + 3 NADP(+) + 3 H2O = sulfite + 3 NADPH + 4 H(+). It functions in the pathway sulfur metabolism; hydrogen sulfide biosynthesis; hydrogen sulfide from sulfite (NADPH route): step 1/1. Functionally, component of the sulfite reductase complex that catalyzes the 6-electron reduction of sulfite to sulfide. This is one of several activities required for the biosynthesis of L-cysteine from sulfate. The protein is Sulfite reductase [NADPH] hemoprotein beta-component of Vibrio atlanticus (strain LGP32) (Vibrio splendidus (strain Mel32)).